Consider the following 317-residue polypeptide: UAP56-interacting factor (317 aa).

M1 carries the post-translational modification N-acetylmethionine. The tract at residues 1-26 (MNRFGTRLVGATATPPPPPKARSNEN) is disordered. Phosphothreonine is present on T14. S23 bears the Phosphoserine mark. The UAP56-binding motif signature appears at 26-44 (NLDKIDMSLDDIIKLNRKE). 2 positions are modified to phosphoserine: S60 and S117. A Glycyl lysine isopeptide (Lys-Gly) (interchain with G-Cter in SUMO1) cross-link involves residue K139. K260 is covalently cross-linked (Glycyl lysine isopeptide (Lys-Gly) (interchain with G-Cter in SUMO2)).

The protein belongs to the UIF family. In terms of assembly, interacts with DDX39B/UAP56 and NXF1; interaction with DDX39B/UAP56 and NXF1 are mutually exclusive. Interacts with SSRP1; required for its recruitment to mRNAs. Interacts with CHTOP.

The protein localises to the nucleus. It localises to the nucleoplasm. It is found in the nucleus speckle. Required for mRNA export from the nucleus to the cytoplasm. Acts as an adapter that uses the DDX39B/UAP56-NFX1 pathway to ensure efficient mRNA export and delivering to the nuclear pore. Associates with spliced and unspliced mRNAs simultaneously with ALYREF/THOC4. The chain is UAP56-interacting factor (Fyttd1) from Mus musculus (Mouse).